Here is a 285-residue protein sequence, read N- to C-terminus: Phosphatase YwpJ (285 aa).

The active-site Nucleophile is D7. D7 provides a ligand contact to Mg(2+). L8 is a phosphate binding site. D9 lines the Mg(2+) pocket. Phosphate-binding positions include 41 to 42 (TG) and K214. Positions 237 and 238 each coordinate Mg(2+). Residues N240 and 282–283 (KH) each bind phosphate.

The protein belongs to the HAD-like hydrolase superfamily. Cof family. Mg(2+) is required as a cofactor.

Catalyzes the dephosphorylation of phosphorylated 5-6 carbon sugars and monophosphate nucleotides (NMP) in vitro. To a lesser extent, dephosphorylates flavin mononucleotide (FMN) in vitro. This is Phosphatase YwpJ (ywpJ) from Bacillus subtilis (strain 168).